The sequence spans 38 residues: Photosystem II reaction center protein L (38 aa).

A helical membrane pass occupies residues 17 to 37; that stretch reads SLYWGLLLMFVLAVLFSSYFF.

The protein belongs to the PsbL family. As to quaternary structure, PSII is composed of 1 copy each of membrane proteins PsbA, PsbB, PsbC, PsbD, PsbE, PsbF, PsbH, PsbI, PsbJ, PsbK, PsbL, PsbM, PsbT, PsbX, PsbY, PsbZ, Psb30/Ycf12, at least 3 peripheral proteins of the oxygen-evolving complex and a large number of cofactors. It forms dimeric complexes.

Its subcellular location is the plastid. It localises to the chloroplast thylakoid membrane. Its function is as follows. One of the components of the core complex of photosystem II (PSII). PSII is a light-driven water:plastoquinone oxidoreductase that uses light energy to abstract electrons from H(2)O, generating O(2) and a proton gradient subsequently used for ATP formation. It consists of a core antenna complex that captures photons, and an electron transfer chain that converts photonic excitation into a charge separation. This subunit is found at the monomer-monomer interface and is required for correct PSII assembly and/or dimerization. In Emiliania huxleyi (Coccolithophore), this protein is Photosystem II reaction center protein L.